The sequence spans 780 residues: Ino eighty subunit 1 (780 aa).

Disordered stretches follow at residues 1-25 (MADVESAGVDDSFAQSEPHDEQQIH) and 563-780 (ANGP…PGWN). A compositionally biased stretch (basic and acidic residues) spans 563-584 (ANGPRRDRKKEREERQKAREEA). A compositionally biased stretch (basic residues) spans 600–613 (SRARAQRNAKRKLA). Positions 614–635 (RAAAAASSTPSASTPKTAAARS) are enriched in low complexity. Composition is skewed to acidic residues over residues 676–686 (LEGEESLDDID) and 723–751 (DADDALSSDEEEEEAEDEELDEMDVEGDD).

In terms of assembly, component of the chromatin-remodeling INO80 complex.

Its subcellular location is the nucleus. Its function is as follows. Probably involved in transcription regulation via its interaction with the INO80 complex, a chromatin-remodeling complex. The polypeptide is Ino eighty subunit 1 (Emericella nidulans (strain FGSC A4 / ATCC 38163 / CBS 112.46 / NRRL 194 / M139) (Aspergillus nidulans)).